We begin with the raw amino-acid sequence, 157 residues long: Deoxyuridine 5'-triphosphate nucleotidohydrolase (157 aa).

Substrate-binding positions include 76–78 (RSG), Asn-89, 93–95 (TID), and Lys-103.

Belongs to the dUTPase family. Mg(2+) is required as a cofactor.

The catalysed reaction is dUTP + H2O = dUMP + diphosphate + H(+). Its pathway is pyrimidine metabolism; dUMP biosynthesis; dUMP from dCTP (dUTP route): step 2/2. Functionally, this enzyme is involved in nucleotide metabolism: it produces dUMP, the immediate precursor of thymidine nucleotides and it decreases the intracellular concentration of dUTP so that uracil cannot be incorporated into DNA. This chain is Deoxyuridine 5'-triphosphate nucleotidohydrolase, found in Brucella abortus (strain 2308).